Consider the following 349-residue polypeptide: DNA polymerase IV (349 aa).

The UmuC domain occupies 4 to 185 (IIHIDCDCFY…LPVAKLHGVG (182 aa)). Residues aspartate 8 and aspartate 103 each coordinate Mg(2+). Glutamate 104 is a catalytic residue.

This sequence belongs to the DNA polymerase type-Y family. In terms of assembly, monomer. Mg(2+) serves as cofactor.

The protein localises to the cytoplasm. It carries out the reaction DNA(n) + a 2'-deoxyribonucleoside 5'-triphosphate = DNA(n+1) + diphosphate. Its function is as follows. Poorly processive, error-prone DNA polymerase involved in untargeted mutagenesis. Copies undamaged DNA at stalled replication forks, which arise in vivo from mismatched or misaligned primer ends. These misaligned primers can be extended by PolIV. Exhibits no 3'-5' exonuclease (proofreading) activity. May be involved in translesional synthesis, in conjunction with the beta clamp from PolIII. This is DNA polymerase IV from Pseudomonas aeruginosa (strain UCBPP-PA14).